A 1031-amino-acid chain; its full sequence is Error-prone DNA polymerase (1031 aa).

This sequence belongs to the DNA polymerase type-C family. DnaE2 subfamily.

The protein localises to the cytoplasm. The catalysed reaction is DNA(n) + a 2'-deoxyribonucleoside 5'-triphosphate = DNA(n+1) + diphosphate. Its function is as follows. DNA polymerase involved in damage-induced mutagenesis and translesion synthesis (TLS). It is not the major replicative DNA polymerase. This is Error-prone DNA polymerase from Pseudomonas syringae pv. syringae (strain B728a).